The sequence spans 144 residues: 3-dehydroquinate dehydratase (144 aa).

Tyr24 acts as the Proton acceptor in catalysis. Positions 73, 79, and 86 each coordinate substrate. The active-site Proton donor is the His99. Residues 100–101 and Arg110 contribute to the substrate site; that span reads LS.

The protein belongs to the type-II 3-dehydroquinase family. In terms of assembly, homododecamer.

It carries out the reaction 3-dehydroquinate = 3-dehydroshikimate + H2O. It participates in metabolic intermediate biosynthesis; chorismate biosynthesis; chorismate from D-erythrose 4-phosphate and phosphoenolpyruvate: step 3/7. In terms of biological role, catalyzes a trans-dehydration via an enolate intermediate. The polypeptide is 3-dehydroquinate dehydratase (Shewanella putrefaciens (strain CN-32 / ATCC BAA-453)).